We begin with the raw amino-acid sequence, 317 residues long: Ribose-phosphate pyrophosphokinase (317 aa).

Residues 43 to 45 (DGE) and 102 to 103 (RQ) contribute to the ATP site. Positions 136 and 175 each coordinate Mg(2+). Lys-198 is an active-site residue. D-ribose 5-phosphate is bound by residues Arg-200, Asp-224, and 228–232 (DTAGT).

Belongs to the ribose-phosphate pyrophosphokinase family. Class I subfamily. In terms of assembly, homohexamer. It depends on Mg(2+) as a cofactor.

Its subcellular location is the cytoplasm. It carries out the reaction D-ribose 5-phosphate + ATP = 5-phospho-alpha-D-ribose 1-diphosphate + AMP + H(+). It functions in the pathway metabolic intermediate biosynthesis; 5-phospho-alpha-D-ribose 1-diphosphate biosynthesis; 5-phospho-alpha-D-ribose 1-diphosphate from D-ribose 5-phosphate (route I): step 1/1. In terms of biological role, involved in the biosynthesis of the central metabolite phospho-alpha-D-ribosyl-1-pyrophosphate (PRPP) via the transfer of pyrophosphoryl group from ATP to 1-hydroxyl of ribose-5-phosphate (Rib-5-P). The sequence is that of Ribose-phosphate pyrophosphokinase from Corynebacterium ammoniagenes (Brevibacterium ammoniagenes).